A 906-amino-acid chain; its full sequence is Probable helicase HelY (906 aa).

A Helicase ATP-binding domain is found at 26 to 184; that stretch reads CSALERGHGV…WIQTVRGDTT (159 aa). An ATP-binding site is contributed by 39 to 46; the sequence is APTGAGKT. Residues 132–135 carry the DEVH box motif; that stretch reads DEVH. The Helicase C-terminal domain maps to 259 to 463; it reads GRPEVIAKLD…SYNMTINLVH (205 aa).

The protein belongs to the helicase family. SKI2 subfamily.

The sequence is that of Probable helicase HelY (helY) from Mycobacterium tuberculosis (strain CDC 1551 / Oshkosh).